Consider the following 308-residue polypeptide: Aspartate carbamoyltransferase catalytic subunit (308 aa).

2 residues coordinate carbamoyl phosphate: arginine 51 and threonine 52. Position 79 (lysine 79) interacts with L-aspartate. Carbamoyl phosphate is bound by residues arginine 101, histidine 130, and glutamine 133. Residues arginine 163 and arginine 215 each contribute to the L-aspartate site. Carbamoyl phosphate-binding residues include alanine 258 and proline 259.

This sequence belongs to the aspartate/ornithine carbamoyltransferase superfamily. ATCase family. As to quaternary structure, heterododecamer (2C3:3R2) of six catalytic PyrB chains organized as two trimers (C3), and six regulatory PyrI chains organized as three dimers (R2).

The enzyme catalyses carbamoyl phosphate + L-aspartate = N-carbamoyl-L-aspartate + phosphate + H(+). The protein operates within pyrimidine metabolism; UMP biosynthesis via de novo pathway; (S)-dihydroorotate from bicarbonate: step 2/3. Functionally, catalyzes the condensation of carbamoyl phosphate and aspartate to form carbamoyl aspartate and inorganic phosphate, the committed step in the de novo pyrimidine nucleotide biosynthesis pathway. The chain is Aspartate carbamoyltransferase catalytic subunit from Pediococcus pentosaceus (strain ATCC 25745 / CCUG 21536 / LMG 10740 / 183-1w).